The following is a 303-amino-acid chain: Flavin-dependent thymidylate synthase (303 aa).

Residues 1 to 21 (MALTSEQRAEIEAQRSEPQLT) are disordered. One can recognise a ThyX domain in the interval 43 to 256 (GFLRVVDYMG…PATAAAFEEY (214 aa)). FAD is bound by residues T89, 112 to 114 (RHR), and E120. DUMP contacts are provided by residues 109 to 112 (QWIR), 120 to 124 (EYSAR), and R195. Positions 112–122 (RHRMASVNEYS) match the ThyX motif motif. FAD is bound by residues 211 to 213 (DLH) and H217. Residue R222 coordinates dUMP. R222 serves as the catalytic Involved in ionization of N3 of dUMP, leading to its activation.

Belongs to the thymidylate synthase ThyX family. In terms of assembly, homotetramer. The cofactor is FAD.

The enzyme catalyses dUMP + (6R)-5,10-methylene-5,6,7,8-tetrahydrofolate + NADPH + H(+) = dTMP + (6S)-5,6,7,8-tetrahydrofolate + NADP(+). Its pathway is pyrimidine metabolism; dTTP biosynthesis. Its function is as follows. Catalyzes the reductive methylation of 2'-deoxyuridine-5'-monophosphate (dUMP) to 2'-deoxythymidine-5'-monophosphate (dTMP) while utilizing 5,10-methylenetetrahydrofolate (mTHF) as the methyl donor, and NADPH and FADH(2) as the reductant. The polypeptide is Flavin-dependent thymidylate synthase (Gluconobacter oxydans (strain 621H) (Gluconobacter suboxydans)).